A 137-amino-acid chain; its full sequence is Urease subunit beta (137 aa).

The segment at 118–137 is disordered; that stretch reads IIAEENKVSENANKESGYNR. Over residues 126 to 137 the composition is skewed to polar residues; sequence SENANKESGYNR.

It belongs to the urease beta subunit family. In terms of assembly, heterotrimer of UreA (gamma), UreB (beta) and UreC (alpha) subunits. Three heterotrimers associate to form the active enzyme.

The protein localises to the cytoplasm. It catalyses the reaction urea + 2 H2O + H(+) = hydrogencarbonate + 2 NH4(+). It functions in the pathway nitrogen metabolism; urea degradation; CO(2) and NH(3) from urea (urease route): step 1/1. This Staphylococcus xylosus protein is Urease subunit beta.